Consider the following 391-residue polypeptide: GATA-binding factor 6-B (391 aa).

The span at 57–69 (GTHSVNSHWSQAT) shows a compositional bias: polar residues. Positions 57-107 (GTHSVNSHWSQATSESSSYSSSSPHPSSRYHYSPSPPMANGSTRDTGYSSS) are disordered. Over residues 70–89 (SESSSYSSSSPHPSSRYHYS) the composition is skewed to low complexity. The span at 96–107 (NGSTRDTGYSSS) shows a compositional bias: polar residues. 2 GATA-type zinc fingers span residues 182–206 (CVNC…CNAC) and 236–260 (CANC…CNAC). A disordered region spans residues 277-334 (KEGIQTRKRKPKNLNKSKSSSSNGNSSHHITMTPTSTTSSTNSDDCIKNGSPSQNTAP). A compositionally biased stretch (basic residues) spans 282-291 (TRKRKPKNLN). The span at 292–319 (KSKSSSSNGNSSHHITMTPTSTTSSTNS) shows a compositional bias: low complexity.

As to expression, in embryos, expressed in the presumptive heart mesoderm. In adults, widely distributed but predominant in the heart.

Its subcellular location is the nucleus. Its function is as follows. Transcriptional activator that binds 5'-GATA-3'-containing motifs within gene promoters. Regulates cardiac-specific transcription during embryogenesis and thereby cardiogenesis. This is GATA-binding factor 6-B (gata6-b) from Xenopus laevis (African clawed frog).